Consider the following 129-residue polypeptide: Glycine cleavage system H protein (129 aa).

The 83-residue stretch at 24-106 (EAVVGITEHA…YGAGWLFRIK (83 aa)) folds into the Lipoyl-binding domain. Position 65 is an N6-lipoyllysine (K65).

The protein belongs to the GcvH family. As to quaternary structure, the glycine cleavage system is composed of four proteins: P, T, L and H. (R)-lipoate is required as a cofactor.

The glycine cleavage system catalyzes the degradation of glycine. The H protein shuttles the methylamine group of glycine from the P protein to the T protein. This chain is Glycine cleavage system H protein, found in Aeromonas hydrophila subsp. hydrophila (strain ATCC 7966 / DSM 30187 / BCRC 13018 / CCUG 14551 / JCM 1027 / KCTC 2358 / NCIMB 9240 / NCTC 8049).